We begin with the raw amino-acid sequence, 219 residues long: RPA-interacting protein (219 aa).

Ser-18 carries the post-translational modification Phosphoserine. Lys-121 is covalently cross-linked (Glycyl lysine isopeptide (Lys-Gly) (interchain with G-Cter in SUMO); in isoform 2). The segment at 137–212 (CPVCTKYNLR…SSLLMSCLAC (76 aa)) adopts an RIP-type zinc-finger fold. Residues 164–180 (SSELTEQKLRACLEGSI) form a mediates nuclear export region.

Interacts with the RPA1 subunit of RPA complex. Post-translationally, sumoylated. Sumoylation is required for localization in the nuclear PML body and transport of RPA complex in PML body. Upon UV irradiation and during S phase, it is desumoylated, releasing RPA complex that is translocated to sites of DNA damage. Sumoylation takes place at different Lys residues. Variant 'Lys-103' adds a sumoylation site and increases total sumoylation levels. Widely expressed. Expressed in pancreas, kidney, muscle, liver, lung, placenta, brain, heart, leukocytes, colon, intestine, ovary, testis, prostate, thymus and spleen.

The protein localises to the cytoplasm. Its subcellular location is the nucleus. It is found in the PML body. Mediates the import of RPA complex into the nucleus, possibly via some interaction with importin beta. Isoform 2 is sumoylated and mediates the localization of RPA complex into the PML body of the nucleus, thereby participating in RPA function in DNA metabolism. This Homo sapiens (Human) protein is RPA-interacting protein (RPAIN).